A 208-amino-acid polypeptide reads, in one-letter code: Uracil phosphoribosyltransferase (208 aa).

5-phospho-alpha-D-ribose 1-diphosphate-binding positions include Arg78, Arg103, and 130 to 138 (DPMLATGGS). Residues Ile193 and 198–200 (GDA) contribute to the uracil site. Position 199 (Asp199) interacts with 5-phospho-alpha-D-ribose 1-diphosphate.

The protein belongs to the UPRTase family. The cofactor is Mg(2+).

It carries out the reaction UMP + diphosphate = 5-phospho-alpha-D-ribose 1-diphosphate + uracil. It functions in the pathway pyrimidine metabolism; UMP biosynthesis via salvage pathway; UMP from uracil: step 1/1. Its activity is regulated as follows. Allosterically activated by GTP. Its function is as follows. Catalyzes the conversion of uracil and 5-phospho-alpha-D-ribose 1-diphosphate (PRPP) to UMP and diphosphate. The chain is Uracil phosphoribosyltransferase from Shewanella sp. (strain ANA-3).